The following is a 777-amino-acid chain: Probable aconitate hydratase, mitochondrial (777 aa).

The transit peptide at 1-26 (MNSLLRLSHLAGPAHYRALHSSSSIW) directs the protein to the mitochondrion. Substrate-binding positions include glutamine 96 and 189–191 (DSH). [4Fe-4S] cluster-binding residues include cysteine 382, cysteine 445, and cysteine 448. Arginine 471 and arginine 476 together coordinate substrate. A disordered region spans residues 534 to 555 (YDPGEDTFQAPSGSGQVDVSPS). A compositionally biased stretch (polar residues) spans 542-555 (QAPSGSGQVDVSPS). Residues arginine 601 and 664–665 (SR) contribute to the substrate site.

It belongs to the aconitase/IPM isomerase family. As to quaternary structure, monomer. [4Fe-4S] cluster is required as a cofactor.

It is found in the mitochondrion. The enzyme catalyses citrate = D-threo-isocitrate. Its pathway is carbohydrate metabolism; tricarboxylic acid cycle; isocitrate from oxaloacetate: step 2/2. Catalyzes the isomerization of citrate to isocitrate via cis-aconitate. The protein is Probable aconitate hydratase, mitochondrial of Caenorhabditis elegans.